The primary structure comprises 149 residues: Secreted RxLR effector protein 47 (149 aa).

An N-terminal signal peptide occupies residues 1–22 (MICLLPLIAVMLFVFATHTVLA). Residues 57-79 (RFLRQETTFEEKPSVNDVHAEER) carry the RxLR-dEER motif.

This sequence belongs to the RxLR effector family.

It is found in the secreted. Its subcellular location is the host membrane. Its function is as follows. Secreted effector that completely suppresses the host cell death induced by cell death-inducing proteins. This is Secreted RxLR effector protein 47 from Plasmopara viticola (Downy mildew of grapevine).